A 636-amino-acid chain; its full sequence is Phosphomethylpyrimidine synthase (636 aa).

The segment at 48-70 (DDTPTDFGGEKNPPVRVYDTSGP) is disordered. Residues asparagine 231, methionine 260, tyrosine 289, histidine 325, 345 to 347 (SRG), 386 to 389 (DGLR), and glutamate 425 contribute to the substrate site. A Zn(2+)-binding site is contributed by histidine 429. Tyrosine 452 contributes to the substrate binding site. Residue histidine 493 participates in Zn(2+) binding. Residues cysteine 573, cysteine 576, and cysteine 581 each contribute to the [4Fe-4S] cluster site.

This sequence belongs to the ThiC family. As to quaternary structure, homodimer. It depends on [4Fe-4S] cluster as a cofactor.

It carries out the reaction 5-amino-1-(5-phospho-beta-D-ribosyl)imidazole + S-adenosyl-L-methionine = 4-amino-2-methyl-5-(phosphooxymethyl)pyrimidine + CO + 5'-deoxyadenosine + formate + L-methionine + 3 H(+). It participates in cofactor biosynthesis; thiamine diphosphate biosynthesis. Catalyzes the synthesis of the hydroxymethylpyrimidine phosphate (HMP-P) moiety of thiamine from aminoimidazole ribotide (AIR) in a radical S-adenosyl-L-methionine (SAM)-dependent reaction. This is Phosphomethylpyrimidine synthase from Cellvibrio japonicus (strain Ueda107) (Pseudomonas fluorescens subsp. cellulosa).